The chain runs to 323 residues: Macrolide efflux protein A (323 aa).

The next 9 helical transmembrane spans lie at 6 to 26 (VLSMSLLGFLPYAVFGPAIGV), 51 to 71 (LTIVAFYMELPVWMVMIVLFI), 105 to 125 (SLQSISYIVSPAVAALLYSVW), 128 to 148 (NAIIAIDVLGAVIASITVLIV), 182 to 202 (FALLLVGTLYMFVYMPINALF), 219 to 239 (ITEISFASGMLIGGLLLGLFG), 245 to 265 (ILLITASIFMMGISLTISGLL), 270 to 290 (FFIFVVCSAIMGLSVPFYSGV), and 303 to 323 (YLGRVFSLTGSIMSLAMPIGL).

This sequence belongs to the major facilitator superfamily. Drug:H(+) antiporter-3 (DHA3) (TC 2.A.1.21) family.

It localises to the cell membrane. Its function is as follows. Confers resistance to 14-membered macrolides including erythromycin and to 15-membered macrolides but not to 16-membered macrolides, lincosamides or analogs of streptogramin B. May function as an efflux pump to regulate intracellular macrolide levels. This is Macrolide efflux protein A (mefA) from Enterococcus faecalis (Streptococcus faecalis).